A 217-amino-acid chain; its full sequence is Adapter protein MecA (217 aa).

This sequence belongs to the MecA family. Homodimer.

In terms of biological role, enables the recognition and targeting of unfolded and aggregated proteins to the ClpC protease or to other proteins involved in proteolysis. Acts negatively in the development of competence by binding ComK and recruiting it to the ClpCP protease. When overexpressed, inhibits sporulation. Also involved in Spx degradation by ClpC. The polypeptide is Adapter protein MecA (Alkalihalophilus pseudofirmus (strain ATCC BAA-2126 / JCM 17055 / OF4) (Bacillus pseudofirmus)).